The primary structure comprises 801 residues: Phenylalanine--tRNA ligase beta subunit (801 aa).

Positions 39 to 153 (AEGLSKLVVG…DEAVPGDAIF (115 aa)) constitute a tRNA-binding domain. The B5 domain maps to 406 to 481 (TEPVEVSTNL…RIYGYDKLPT (76 aa)). Mg(2+) is bound by residues D459, D465, E468, and E469. Residues 708 to 801 (TKFPAMTRDI…LTEQVGAEVR (94 aa)) form the FDX-ACB domain.

This sequence belongs to the phenylalanyl-tRNA synthetase beta subunit family. Type 1 subfamily. As to quaternary structure, tetramer of two alpha and two beta subunits. It depends on Mg(2+) as a cofactor.

It localises to the cytoplasm. The catalysed reaction is tRNA(Phe) + L-phenylalanine + ATP = L-phenylalanyl-tRNA(Phe) + AMP + diphosphate + H(+). The sequence is that of Phenylalanine--tRNA ligase beta subunit from Streptococcus pyogenes serotype M3 (strain SSI-1).